The following is a 250-amino-acid chain: uncharacterized protein (250 aa).

7 helical membrane passes run 36–56 (VALGLVVSGALAYATSSVPAV), 73–93 (PLYMVVAFAPLVLMLIAGFAM), 101–121 (AGALYWTIVSLIGASLGSVML), 128–148 (VAATFFVTATAFGGLSLFGYT), 156–176 (FGSFLMMGVIGLIVASIVSIF), 180–200 (PALLFAINVLGVLIFSGLIAY), and 225–245 (FGALSLYINFINLFQFLLSFF).

The protein belongs to the BI1 family.

The protein resides in the cell membrane. This is an uncharacterized protein from Caulobacter vibrioides (strain ATCC 19089 / CIP 103742 / CB 15) (Caulobacter crescentus).